The following is a 102-amino-acid chain: Integration host factor subunit beta (102 aa).

It belongs to the bacterial histone-like protein family. In terms of assembly, heterodimer of an alpha and a beta chain.

In terms of biological role, this protein is one of the two subunits of integration host factor, a specific DNA-binding protein that functions in genetic recombination as well as in transcriptional and translational control. The protein is Integration host factor subunit beta of Rhizobium rhizogenes (strain K84 / ATCC BAA-868) (Agrobacterium radiobacter).